The chain runs to 354 residues: UDP-galactose transporter homolog 1 (354 aa).

A run of 5 helical transmembrane segments spans residues 6–26 (GGSI…FLTW), 54–74 (LVIN…YSVV), 95–112 (FFKS…SSPL), 123–143 (LAYL…HFVL), and 148–168 (FPLY…IFTL). A glycan (N-linked (GlcNAc...) asparagine) is linked at Asn-202. The next 4 membrane-spanning stretches (helical) occupy residues 227-247 (YLMC…ALIF), 268-288 (MNIL…FIIL), 295-317 (ILIT…LFGH), and 321-340 (GLQW…EALV).

Belongs to the nucleotide-sugar transporter family. SLC35B subfamily.

The protein localises to the endoplasmic reticulum membrane. In terms of biological role, may be involved in specific transport of UDP-Gal from the cytosol to the Golgi lumen. Involved in the maintenance of optimal conditions for the folding of secretory pathway proteins in the endoplasmic reticulum. The protein is UDP-galactose transporter homolog 1 (HUT1) of Debaryomyces hansenii (strain ATCC 36239 / CBS 767 / BCRC 21394 / JCM 1990 / NBRC 0083 / IGC 2968) (Yeast).